The chain runs to 2812 residues: Polyunsaturated fatty acid synthase subunit A (2812 aa).

The region spanning 12 to 472 is the Ketosynthase family 3 (KS3) domain; it reads DTRIAVIGMS…GANYHAVLEE (461 aa). Catalysis depends on for beta-ketoacyl synthase activity residues cysteine 213, histidine 348, and histidine 390. Residues 602–913 enclose the Malonyl-CoA:ACP transacylase (MAT) domain; sequence LFSGQGAQYT…TVSVNPASGK (312 aa). Residues 1000 to 1048 adopt a coiled-coil conformation; it reads DEEAKREAARLQKQLEDAQRQLDEAKRAADEANQKLAAAKEEAKSAAAS. Carrier domains are found at residues 1114–1193, 1232–1308, and 1342–1418; these read ALLA…KAEI, ERAE…KAEI, and AKAE…KAEI. Residues serine 1152, serine 1267, and serine 1377 each carry the O-(pantetheine 4'-phosphoryl)serine modification. Residues 1422-1442 are disordered; the sequence is SAPAPAAAAPAPAAPAPAAAA. A compositionally biased stretch (low complexity) spans 1423 to 1442; the sequence is APAPAAAAPAPAAPAPAAAA. In terms of domain architecture, Carrier 4 spans 1455–1531; it reads AKAETVVMEV…EVVDAMKAEI (77 aa). Position 1490 is an O-(pantetheine 4'-phosphoryl)serine (serine 1490). Residues 1535 to 1555 are disordered; that stretch reads SAPAPAAAAPAPAAPAPAAAA. Residues 1536–1555 show a composition bias toward low complexity; sequence APAPAAAAPAPAAPAPAAAA. Carrier domains lie at 1568–1644, 1681–1757, 1792–1868, and 1903–1979; these read AKAE…KAEI. Serine 1603, serine 1716, serine 1827, and serine 1938 each carry O-(pantetheine 4'-phosphoryl)serine. The region spanning 2257 to 2484 is the Ketoreductase (KR) domain; the sequence is VVSGGARGIT…VKSICFGPWD (228 aa). Positions 2524 to 2651 are N-terminal hotdog fold; that stretch reads EILVGNWRTP…RAVVVLSSQG (128 aa). The 289-residue stretch at 2524–2812 folds into the PKS/mFAS DH domain; it reads EILVGNWRTP…SVIATDSLAF (289 aa). The dehydratase (DH) domain stretch occupies residues 2540–2800; that stretch reads ETITLHRKIS…NEQGDLFIDV (261 aa). Catalysis depends on histidine 2559, which acts as the Proton acceptor; for dehydratase activity. Positions 2666–2812 are C-terminal hotdog fold; that stretch reads ADPAAQSAVY…SVIATDSLAF (147 aa). Aspartate 2730 serves as the catalytic Proton donor; for dehydratase activity.

Component of the polyunsaturated fatty acid synthase complex composed of at least ORF-A, ORF-B and ORF-C. Pantetheine 4'-phosphate serves as cofactor.

The protein operates within lipid metabolism; fatty acid biosynthesis. Functionally, poliketide synthase-like protein; part of the polyunsaturated fatty acid synthase composed of the 3 PKS-like subunits A, B and C. While the saturated fatty acids (SFAs) in Thraustochytrium are produced by the conventional fatty acid synthase (FAS) pathway, polyunsaturated fatty acids (PUFAs) including docosahexeanoic acid (DHA) and docosapentaenoic acid (DPA) are synthesized via an anaerobical PKS pathway. PUFA synthase assimilates fatty acyl-CoA, the product of FAS, as the starter unit to synthesize DPA, and this starter unit may be butyryl-CoA, hexanoyl-CoA, or octanoyl-CoA. DPA and DHA biosynthesis seem to differ by the reduction at the N-3 position by PUFA synthase, not the extension of carbon chain. In DHA biosynthesis, PUFA synthase extends the fatty acyl chain from the methyl toward the carboxyl end, and the double bond is formed when the carbon chain is growing, instead of afterward. Therefore, PUFA synthase is unable to transform DPA to DHA, suggesting that DPA is not the precursor of DHA. Moreover, DPA molecule is partly extended by FAS KS domain, so DPA biosynthesis is less dependent on PUFA synthase KS domain than DHA. This Thraustochytrium sp. (strain ATCC 26185 / S-3) protein is Polyunsaturated fatty acid synthase subunit A.